The sequence spans 400 residues: Exodeoxyribonuclease 7 large subunit (400 aa).

This sequence belongs to the XseA family. Heterooligomer composed of large and small subunits.

Its subcellular location is the cytoplasm. The catalysed reaction is Exonucleolytic cleavage in either 5'- to 3'- or 3'- to 5'-direction to yield nucleoside 5'-phosphates.. In terms of biological role, bidirectionally degrades single-stranded DNA into large acid-insoluble oligonucleotides, which are then degraded further into small acid-soluble oligonucleotides. This is Exodeoxyribonuclease 7 large subunit from Clostridium perfringens (strain ATCC 13124 / DSM 756 / JCM 1290 / NCIMB 6125 / NCTC 8237 / Type A).